Consider the following 71-residue polypeptide: Small ribosomal subunit protein bS21 (71 aa).

The protein belongs to the bacterial ribosomal protein bS21 family.

In Buchnera aphidicola subsp. Baizongia pistaciae (strain Bp), this protein is Small ribosomal subunit protein bS21.